Consider the following 326-residue polypeptide: Probable iron chelatin transport system permease protein HP_0889 (326 aa).

A run of 10 helical transmembrane segments spans residues 7–27 (IALA…ESLS), 64–84 (ILAL…QTIF), 91–111 (PFLL…IAVV), 113–133 (SNIA…VLAM), 142–162 (LSLV…AGAI), 164–184 (FFVI…SLSL), 187–207 (YKDC…LFLL), 241–261 (VASA…LVIP), 275–295 (LLLS…VVAK), and 301–321 (DLPV…WLLF).

It belongs to the binding-protein-dependent transport system permease family. FecCD subfamily.

It localises to the cell inner membrane. Part of a binding-protein-dependent transport system for an iron chelatin; probably responsible for the translocation of the substrate across the membrane. The polypeptide is Probable iron chelatin transport system permease protein HP_0889 (Helicobacter pylori (strain ATCC 700392 / 26695) (Campylobacter pylori)).